A 360-amino-acid polypeptide reads, in one-letter code: Phospho-N-acetylmuramoyl-pentapeptide-transferase (360 aa).

At 1–25 the chain is on the periplasmic side; it reads MLVWLAEHLVKYYSGFNVFSYLTFR. A helical membrane pass occupies residues 26-46; that stretch reads AIVSLLTALFISLWMGPRMIA. Over 47-71 the chain is Cytoplasmic; the sequence is HLQKLSFGQVVRNDGPESHFSKRGT. Residues 72–92 form a helical membrane-spanning segment; the sequence is PTMGGIMILTAIVISVLLWAY. Residue proline 93 is a topological domain, periplasmic. Residues 94–114 traverse the membrane as a helical segment; sequence SNPYVWCVLVVLVGYGIIGFV. The Cytoplasmic portion of the chain corresponds to 115 to 131; it reads DDYRKVVRKDTKGLIAR. A helical membrane pass occupies residues 132–152; sequence WKYFWMSVIALGVAFALYLAG. The Periplasmic segment spans residues 153–167; sequence KDTPATQLVVPFFKD. A helical membrane pass occupies residues 168–188; sequence VMPQLGLFYILLAYFVIVGTG. Residues 189–198 lie on the Cytoplasmic side of the membrane; that stretch reads NAVNLTDGLD. The helical transmembrane segment at 199 to 219 threads the bilayer; the sequence is GLAIMPTVFVAGGFALVAWAT. The Periplasmic portion of the chain corresponds to 220–235; sequence GNMNFASYLHIPYLRH. The helical transmembrane segment at 236–256 threads the bilayer; that stretch reads AGELVIVCTAIVGAGLGFLWF. The Cytoplasmic portion of the chain corresponds to 257–262; sequence NTYPAQ. The helical transmembrane segment at 263–283 threads the bilayer; that stretch reads VFMGDVGSLALGGALGIIAVL. The Periplasmic segment spans residues 284 to 287; sequence LRQE. The chain crosses the membrane as a helical span at residues 288 to 308; sequence FLLVIMGGVFVVETLSVILQV. Residues 309 to 337 are Cytoplasmic-facing; the sequence is GSFKLRGQRIFRMAPIHHHYELKGWPEPR. The helical transmembrane segment at 338-358 threads the bilayer; the sequence is VIVRFWIISLMLVLIGLATLK. At 359–360 the chain is on the periplasmic side; that stretch reads VR.

It belongs to the glycosyltransferase 4 family. MraY subfamily. Requires Mg(2+) as cofactor.

It is found in the cell inner membrane. It carries out the reaction UDP-N-acetyl-alpha-D-muramoyl-L-alanyl-gamma-D-glutamyl-meso-2,6-diaminopimeloyl-D-alanyl-D-alanine + di-trans,octa-cis-undecaprenyl phosphate = di-trans,octa-cis-undecaprenyl diphospho-N-acetyl-alpha-D-muramoyl-L-alanyl-D-glutamyl-meso-2,6-diaminopimeloyl-D-alanyl-D-alanine + UMP. It participates in cell wall biogenesis; peptidoglycan biosynthesis. Functionally, catalyzes the initial step of the lipid cycle reactions in the biosynthesis of the cell wall peptidoglycan: transfers peptidoglycan precursor phospho-MurNAc-pentapeptide from UDP-MurNAc-pentapeptide onto the lipid carrier undecaprenyl phosphate, yielding undecaprenyl-pyrophosphoryl-MurNAc-pentapeptide, known as lipid I. The chain is Phospho-N-acetylmuramoyl-pentapeptide-transferase from Escherichia coli O7:K1 (strain IAI39 / ExPEC).